A 496-amino-acid chain; its full sequence is ATP synthase subunit beta (496 aa).

Residue 155 to 162 participates in ATP binding; sequence GGAGVGKT.

It belongs to the ATPase alpha/beta chains family. In terms of assembly, F-type ATPases have 2 components, CF(1) - the catalytic core - and CF(0) - the membrane proton channel. CF(1) has five subunits: alpha(3), beta(3), gamma(1), delta(1), epsilon(1). CF(0) has three main subunits: a(1), b(2) and c(9-12). The alpha and beta chains form an alternating ring which encloses part of the gamma chain. CF(1) is attached to CF(0) by a central stalk formed by the gamma and epsilon chains, while a peripheral stalk is formed by the delta and b chains.

It is found in the cell membrane. It carries out the reaction ATP + H2O + 4 H(+)(in) = ADP + phosphate + 5 H(+)(out). Produces ATP from ADP in the presence of a proton gradient across the membrane. The catalytic sites are hosted primarily by the beta subunits. This Karelsulcia muelleri (strain GWSS) (Sulcia muelleri) protein is ATP synthase subunit beta.